Here is a 492-residue protein sequence, read N- to C-terminus: N-succinylglutamate 5-semialdehyde dehydrogenase (492 aa).

An NAD(+)-binding site is contributed by 220 to 225 (GSASTG). Residues E243 and C277 contribute to the active site.

This sequence belongs to the aldehyde dehydrogenase family. AstD subfamily.

It carries out the reaction N-succinyl-L-glutamate 5-semialdehyde + NAD(+) + H2O = N-succinyl-L-glutamate + NADH + 2 H(+). Its pathway is amino-acid degradation; L-arginine degradation via AST pathway; L-glutamate and succinate from L-arginine: step 4/5. Catalyzes the NAD-dependent reduction of succinylglutamate semialdehyde into succinylglutamate. The sequence is that of N-succinylglutamate 5-semialdehyde dehydrogenase from Salmonella typhimurium (strain LT2 / SGSC1412 / ATCC 700720).